The primary structure comprises 443 residues: Probable glycine dehydrogenase (decarboxylating) subunit 1 (443 aa).

Belongs to the GcvP family. N-terminal subunit subfamily. As to quaternary structure, the glycine cleavage system is composed of four proteins: P, T, L and H. In this organism, the P 'protein' is a heterodimer of two subunits.

It catalyses the reaction N(6)-[(R)-lipoyl]-L-lysyl-[glycine-cleavage complex H protein] + glycine + H(+) = N(6)-[(R)-S(8)-aminomethyldihydrolipoyl]-L-lysyl-[glycine-cleavage complex H protein] + CO2. Functionally, the glycine cleavage system catalyzes the degradation of glycine. The P protein binds the alpha-amino group of glycine through its pyridoxal phosphate cofactor; CO(2) is released and the remaining methylamine moiety is then transferred to the lipoamide cofactor of the H protein. This chain is Probable glycine dehydrogenase (decarboxylating) subunit 1, found in Nitratidesulfovibrio vulgaris (strain DP4) (Desulfovibrio vulgaris).